An 872-amino-acid chain; its full sequence is Cyanophycin synthetase (872 aa).

The ATP-grasp domain maps to 224 to 480 (KTILQDAGVP…VAAPVMDMLF (257 aa)). Position 495-501 (495-501 (GTNGKTT)) interacts with ATP.

This sequence in the C-terminal section; belongs to the MurCDEF family. In terms of assembly, homodimer.

The catalysed reaction is [L-4-(L-arginin-2-N-yl)aspartate](n) + L-aspartate + ATP = [L-4-(L-arginin-2-N-yl)aspartate](n)-L-aspartate + ADP + phosphate + H(+). It catalyses the reaction [L-4-(L-arginin-2-N-yl)aspartate](n)-L-aspartate + L-arginine + ATP = [L-4-(L-arginin-2-N-yl)aspartate](n+1) + ADP + phosphate + H(+). Functionally, catalyzes the ATP-dependent polymerization of arginine and aspartate to multi-L-arginyl-poly-L-aspartic acid (cyanophycin; a water-insoluble reserve polymer). This chain is Cyanophycin synthetase (cphA), found in Crocosphaera subtropica (strain ATCC 51142 / BH68) (Cyanothece sp. (strain ATCC 51142)).